Consider the following 578-residue polypeptide: MKDTIRQLIQQALTRLVTEGVLPEGLTPAIQVENARDKTHGDFASNIAMMLAKPAGMKPRDLAEKLIAALPADEQVSKVEIAGPGFLNFFQNTAALASRLDAALSDPQLSVRKAGAAQRVVVDLSAPNLAKEMHVGHLRSTIIGDGVANVLEFLGDTVIRQNHVGDWGTQFGMLLAYLQEKPATSDELSDLENFYRAAKQRFDESEEFAERARGLVVKLQAGDAECLTLWTRFKDISLSHCQQTYERLNVKLTPADVMGESAYNDDLANVVNDLKAAGLLVESNGAQCVFLEEFRTADDTPLPVIVQKAGGGYLYATTDLAAIRYRSKVLKADRALYFVDQRQALHFQQVFEVARRAGFVHEGMQLEHMGFGTMNGADGRPFKTRDGGTVKLIDLLDEAQERAYTLVKEKNPQVAEAELRSIAKAVGISAVKYADLSKHRASDYSFNFDQMLSFEGNTAPYLLYAYTRVAGVFRKLGTPFDASKGHIVLEAPQEQELAARLAQFNETLNNVAEKGTPHVLCAYLYDLAGLFSSFYENCPILGAENPDQQQSRLRLAALTGRTLKQGLDLLGLETLERM.

Positions 127-137 (PNLAKEMHVGH) match the 'HIGH' region motif.

Belongs to the class-I aminoacyl-tRNA synthetase family. As to quaternary structure, monomer.

The protein localises to the cytoplasm. It catalyses the reaction tRNA(Arg) + L-arginine + ATP = L-arginyl-tRNA(Arg) + AMP + diphosphate. The chain is Arginine--tRNA ligase from Pseudomonas syringae pv. tomato (strain ATCC BAA-871 / DC3000).